A 375-amino-acid chain; its full sequence is uncharacterized protein (375 aa).

Residues 54-78 form a disordered region; sequence EGIPPPTQSQEPLKPQENISRPIHH.

This is an uncharacterized protein from Bos taurus (Bovine).